A 451-amino-acid chain; its full sequence is uncharacterized protein (451 aa).

The Mn(2+) site is built by D305, D316, H384, E414, and E428.

The protein belongs to the peptidase M24B family. The cofactor is Mn(2+).

This is an uncharacterized protein from Schizosaccharomyces pombe (strain 972 / ATCC 24843) (Fission yeast).